Reading from the N-terminus, the 113-residue chain is uncharacterized protein (113 aa).

A run of 2 helical transmembrane segments spans residues 1-21 (MLIAGTLCVCAAVISAVFGTW) and 48-68 (IMLAAGGVVALVAVAHTALIV).

The protein to M.tuberculosis Rv0039.

Its subcellular location is the cell membrane. This is an uncharacterized protein from Mycobacterium leprae (strain TN).